A 32-amino-acid chain; its full sequence is Delta-conotoxin-like MVID (32 aa).

3 cysteine pairs are disulfide-bonded: Cys-3–Cys-18, Cys-10–Cys-22, and Cys-17–Cys-27. Pro-14 is modified (4-hydroxyproline).

Belongs to the conotoxin O1 superfamily. As to expression, expressed by the venom duct.

The protein localises to the secreted. Functionally, delta-conotoxins bind to site 6 of voltage-gated sodium channels (Nav) and inhibit the inactivation process. The chain is Delta-conotoxin-like MVID from Conus magus (Magical cone).